The following is a 213-amino-acid chain: MGMTSRRARERERLIQRLHEEGIRDPAVLKVIQETPRHIFVDEALSSRAYEDTALPIGFRQTISQPYIVARMTEALLAGGSLQKVLEVGTGSGYQTAILAGLAGLVYTVERIKPLLTQAQARFKHLGISNIRAKCADGLWGWPAYGPYQGILVAAAPREIPQTLLKQLAVGGRMVIPVGASSGTQSLMIVTRTADDFEMKTLERVSFVPLVGE.

The active site involves Ser-64.

The protein belongs to the methyltransferase superfamily. L-isoaspartyl/D-aspartyl protein methyltransferase family.

The protein resides in the cytoplasm. The enzyme catalyses [protein]-L-isoaspartate + S-adenosyl-L-methionine = [protein]-L-isoaspartate alpha-methyl ester + S-adenosyl-L-homocysteine. In terms of biological role, catalyzes the methyl esterification of L-isoaspartyl residues in peptides and proteins that result from spontaneous decomposition of normal L-aspartyl and L-asparaginyl residues. It plays a role in the repair and/or degradation of damaged proteins. The chain is Protein-L-isoaspartate O-methyltransferase 1 from Nitrosococcus oceani (strain ATCC 19707 / BCRC 17464 / JCM 30415 / NCIMB 11848 / C-107).